The primary structure comprises 237 residues: Large ribosomal subunit protein uL1 (237 aa).

Belongs to the universal ribosomal protein uL1 family. As to quaternary structure, part of the 50S ribosomal subunit.

Its function is as follows. Binds directly to 23S rRNA. The L1 stalk is quite mobile in the ribosome, and is involved in E site tRNA release. In terms of biological role, protein L1 is also a translational repressor protein, it controls the translation of the L11 operon by binding to its mRNA. In Leptothrix cholodnii (strain ATCC 51168 / LMG 8142 / SP-6) (Leptothrix discophora (strain SP-6)), this protein is Large ribosomal subunit protein uL1.